Here is a 249-residue protein sequence, read N- to C-terminus: uncharacterized protein (249 aa).

The protein resides in the cytoplasm. It localises to the nucleus. This is an uncharacterized protein from Schizosaccharomyces pombe (strain 972 / ATCC 24843) (Fission yeast).